Reading from the N-terminus, the 982-residue chain is Mineralocorticoid receptor (982 aa).

The interval 1 to 601 (METKGYHSLP…STGSSRPSKI (601 aa)) is modulating. A compositionally biased stretch (polar residues) spans 230–242 (QGTPLTCSPNVEN). Disordered stretches follow at residues 230-328 (QGTP…AAST) and 345-375 (SGTS…PFPK). A phosphoserine mark is found at S249, S258, S282, S286, and S298. Over residues 258–299 (SPLSSPLSSMKSSISSPPSHCSVKSPVSSPNNVTPRSSVSSP) the composition is skewed to low complexity. Residues 300–328 (ANINNSRCSVSSPSNTNNRSTLSSPAAST) are compositionally biased toward polar residues. The segment covering 345–354 (SGTSAGSSTS) has biased composition (low complexity). 8 residues coordinate Zn(2+): C602, C605, C619, C622, C638, C644, C654, and C657. 2 NR C4-type zinc fingers span residues 602 to 622 (CLVC…CGSC) and 638 to 662 (CAGR…LQKC). Positions 602–667 (CLVCGDEASG…RLQKCLQAGM (66 aa)) form a DNA-binding region, nuclear receptor. Residues 668-723 (NLGARRSKKLGKLKGIHEEQPQQQPPPPPPPPQSPEEGTTYIAPAKEPSVNTALVP) are hinge. Positions 682 to 708 (GIHEEQPQQQPPPPPPPPQSPEEGTTY) are disordered. Residues 690–701 (QQPPPPPPPPQS) show a composition bias toward pro residues. One can recognise an NR LBD domain in the interval 724–962 (QLSAISRALT…EFPAMLVEII (239 aa)). 21-hydroxyprogesterone is bound by residues N768 and Q774. Positions 768 and 774 each coordinate aldosterone. Residues N768 and Q774 each contribute to the progesterone site. The important for coactivator binding stretch occupies residues 780–783 (KWAK). Positions 815 and 943 each coordinate 21-hydroxyprogesterone. Aldosterone is bound by residues R815 and T943. Progesterone is bound by residues R815 and T943.

The protein belongs to the nuclear hormone receptor family. NR3 subfamily. In terms of processing, phosphorylated. In terms of tissue distribution, expressed in hippocampus, being restricted to the more superficial cortical layers.

The protein resides in the cytoplasm. The protein localises to the nucleus. In terms of biological role, receptor for both mineralocorticoids (MC) such as aldosterone and glucocorticoids (GC) such as corticosterone or cortisol. Binds to mineralocorticoid response elements (MRE) and transactivates target genes. The effect of MC is to increase ion and water transport and thus raise extracellular fluid volume and blood pressure and lower potassium levels. In Saimiri sciureus (Common squirrel monkey), this protein is Mineralocorticoid receptor (NR3C2).